We begin with the raw amino-acid sequence, 417 residues long: Serine hydroxymethyltransferase (417 aa).

Residues L121 and 125–127 (GHL) contribute to the (6S)-5,6,7,8-tetrahydrofolate site. K230 carries the post-translational modification N6-(pyridoxal phosphate)lysine. 355-357 (SPF) provides a ligand contact to (6S)-5,6,7,8-tetrahydrofolate.

The protein belongs to the SHMT family. Homodimer. Pyridoxal 5'-phosphate is required as a cofactor.

The protein localises to the cytoplasm. The enzyme catalyses (6R)-5,10-methylene-5,6,7,8-tetrahydrofolate + glycine + H2O = (6S)-5,6,7,8-tetrahydrofolate + L-serine. It participates in one-carbon metabolism; tetrahydrofolate interconversion. It functions in the pathway amino-acid biosynthesis; glycine biosynthesis; glycine from L-serine: step 1/1. In terms of biological role, catalyzes the reversible interconversion of serine and glycine with tetrahydrofolate (THF) serving as the one-carbon carrier. This reaction serves as the major source of one-carbon groups required for the biosynthesis of purines, thymidylate, methionine, and other important biomolecules. Also exhibits THF-independent aldolase activity toward beta-hydroxyamino acids, producing glycine and aldehydes, via a retro-aldol mechanism. This is Serine hydroxymethyltransferase from Legionella pneumophila (strain Corby).